Here is a 420-residue protein sequence, read N- to C-terminus: Gamma-glutamyl phosphate reductase (420 aa).

This sequence belongs to the gamma-glutamyl phosphate reductase family.

It localises to the cytoplasm. It carries out the reaction L-glutamate 5-semialdehyde + phosphate + NADP(+) = L-glutamyl 5-phosphate + NADPH + H(+). The protein operates within amino-acid biosynthesis; L-proline biosynthesis; L-glutamate 5-semialdehyde from L-glutamate: step 2/2. In terms of biological role, catalyzes the NADPH-dependent reduction of L-glutamate 5-phosphate into L-glutamate 5-semialdehyde and phosphate. The product spontaneously undergoes cyclization to form 1-pyrroline-5-carboxylate. This Cereibacter sphaeroides (strain ATCC 17023 / DSM 158 / JCM 6121 / CCUG 31486 / LMG 2827 / NBRC 12203 / NCIMB 8253 / ATH 2.4.1.) (Rhodobacter sphaeroides) protein is Gamma-glutamyl phosphate reductase.